The sequence spans 217 residues: 3,4-dihydroxy-2-butanone 4-phosphate synthase (217 aa).

D-ribulose 5-phosphate contacts are provided by residues 37 to 38 (RE), D42, 150 to 154 (RGGHT), and E174. Residue E38 coordinates Mg(2+). H153 is a Mg(2+) binding site.

It belongs to the DHBP synthase family. Homodimer. Requires Mg(2+) as cofactor. The cofactor is Mn(2+).

The enzyme catalyses D-ribulose 5-phosphate = (2S)-2-hydroxy-3-oxobutyl phosphate + formate + H(+). The protein operates within cofactor biosynthesis; riboflavin biosynthesis; 2-hydroxy-3-oxobutyl phosphate from D-ribulose 5-phosphate: step 1/1. In terms of biological role, catalyzes the conversion of D-ribulose 5-phosphate to formate and 3,4-dihydroxy-2-butanone 4-phosphate. This is 3,4-dihydroxy-2-butanone 4-phosphate synthase from Pectobacterium carotovorum subsp. carotovorum (strain PC1).